The following is a 395-amino-acid chain: Elongation factor Tu (395 aa).

Residues lysine 10–valine 204 form the tr-type G domain. The tract at residues glycine 19–threonine 26 is G1. Position 19 to 26 (glycine 19 to threonine 26) interacts with GTP. Residue threonine 26 participates in Mg(2+) binding. A G2 region spans residues glycine 60 to alanine 64. Residues aspartate 81–glycine 84 form a G3 region. Residues aspartate 81–histidine 85 and asparagine 136–aspartate 139 contribute to the GTP site. The interval asparagine 136 to aspartate 139 is G4. Residues serine 174 to leucine 176 are G5.

Belongs to the TRAFAC class translation factor GTPase superfamily. Classic translation factor GTPase family. EF-Tu/EF-1A subfamily. As to quaternary structure, monomer.

Its subcellular location is the cytoplasm. The enzyme catalyses GTP + H2O = GDP + phosphate + H(+). In terms of biological role, GTP hydrolase that promotes the GTP-dependent binding of aminoacyl-tRNA to the A-site of ribosomes during protein biosynthesis. This Exiguobacterium sp. (strain ATCC BAA-1283 / AT1b) protein is Elongation factor Tu.